The chain runs to 440 residues: UDP-N-acetylmuramoylalanine--D-glutamate ligase (440 aa).

112–118 (GSNGKST) contributes to the ATP binding site.

The protein belongs to the MurCDEF family.

Its subcellular location is the cytoplasm. The catalysed reaction is UDP-N-acetyl-alpha-D-muramoyl-L-alanine + D-glutamate + ATP = UDP-N-acetyl-alpha-D-muramoyl-L-alanyl-D-glutamate + ADP + phosphate + H(+). It functions in the pathway cell wall biogenesis; peptidoglycan biosynthesis. Its function is as follows. Cell wall formation. Catalyzes the addition of glutamate to the nucleotide precursor UDP-N-acetylmuramoyl-L-alanine (UMA). The polypeptide is UDP-N-acetylmuramoylalanine--D-glutamate ligase (Blochmanniella pennsylvanica (strain BPEN)).